Here is a 655-residue protein sequence, read N- to C-terminus: 1-deoxy-D-xylulose-5-phosphate synthase (655 aa).

Thiamine diphosphate is bound by residues His73 and 114-116; that span reads SHA. Asp145 contacts Mg(2+). Residues 146-147, Asn174, Tyr285, and Glu367 contribute to the thiamine diphosphate site; that span reads GA. Asn174 provides a ligand contact to Mg(2+). The interval 626–655 is disordered; sequence RQPAIEDDPTSPGEAAPAGERAGEAIGDQR. The span at 646 to 655 shows a compositional bias: basic and acidic residues; that stretch reads RAGEAIGDQR.

The protein belongs to the transketolase family. DXPS subfamily. Homodimer. Requires Mg(2+) as cofactor. Thiamine diphosphate serves as cofactor.

The enzyme catalyses D-glyceraldehyde 3-phosphate + pyruvate + H(+) = 1-deoxy-D-xylulose 5-phosphate + CO2. It functions in the pathway metabolic intermediate biosynthesis; 1-deoxy-D-xylulose 5-phosphate biosynthesis; 1-deoxy-D-xylulose 5-phosphate from D-glyceraldehyde 3-phosphate and pyruvate: step 1/1. Its function is as follows. Catalyzes the acyloin condensation reaction between C atoms 2 and 3 of pyruvate and glyceraldehyde 3-phosphate to yield 1-deoxy-D-xylulose-5-phosphate (DXP). In Frankia casuarinae (strain DSM 45818 / CECT 9043 / HFP020203 / CcI3), this protein is 1-deoxy-D-xylulose-5-phosphate synthase.